We begin with the raw amino-acid sequence, 79 residues long: Cell division protein ZapB (79 aa).

The stretch at 4–78 (EVFEKLEAKV…LRALLGKMEE (75 aa)) forms a coiled coil.

Belongs to the ZapB family. In terms of assembly, homodimer. The ends of the coiled-coil dimer bind to each other, forming polymers. Interacts with FtsZ.

It localises to the cytoplasm. Functionally, non-essential, abundant cell division factor that is required for proper Z-ring formation. It is recruited early to the divisome by direct interaction with FtsZ, stimulating Z-ring assembly and thereby promoting cell division earlier in the cell cycle. Its recruitment to the Z-ring requires functional FtsA or ZipA. This chain is Cell division protein ZapB, found in Pectobacterium atrosepticum (strain SCRI 1043 / ATCC BAA-672) (Erwinia carotovora subsp. atroseptica).